A 172-amino-acid chain; its full sequence is NADH-quinone oxidoreductase subunit B (172 aa).

The [4Fe-4S] cluster site is built by cysteine 42, cysteine 43, cysteine 107, and cysteine 136.

The protein belongs to the complex I 20 kDa subunit family. As to quaternary structure, NDH-1 is composed of 14 different subunits. Subunits NuoB, C, D, E, F, and G constitute the peripheral sector of the complex. [4Fe-4S] cluster serves as cofactor.

It localises to the cell inner membrane. It carries out the reaction a quinone + NADH + 5 H(+)(in) = a quinol + NAD(+) + 4 H(+)(out). NDH-1 shuttles electrons from NADH, via FMN and iron-sulfur (Fe-S) centers, to quinones in the respiratory chain. The immediate electron acceptor for the enzyme in this species is believed to be ubiquinone. Couples the redox reaction to proton translocation (for every two electrons transferred, four hydrogen ions are translocated across the cytoplasmic membrane), and thus conserves the redox energy in a proton gradient. The protein is NADH-quinone oxidoreductase subunit B of Sulfurovum sp. (strain NBC37-1).